The sequence spans 204 residues: Large ribosomal subunit protein eL15 (204 aa).

This sequence belongs to the eukaryotic ribosomal protein eL15 family. In terms of assembly, component of the large ribosomal subunit.

The protein resides in the cytoplasm. In terms of biological role, component of the large ribosomal subunit. The ribosome is a large ribonucleoprotein complex responsible for the synthesis of proteins in the cell. The protein is Large ribosomal subunit protein eL15 (rpl15) of Carassius auratus (Goldfish).